The primary structure comprises 764 residues: Polyribonucleotide nucleotidyltransferase (764 aa).

The Mg(2+) site is built by aspartate 555 and aspartate 561. Positions 621–680 (PHITSINIPQNKIGEVIGPKGKTINQITEETGANITIEDDGTVFISAVGGESAREAEEKI) constitute a KH domain. In terms of domain architecture, S1 motif spans 692 to 761 (GDRFLGTVVK…NRGKISLVLV (70 aa)).

The protein belongs to the polyribonucleotide nucleotidyltransferase family. Requires Mg(2+) as cofactor.

Its subcellular location is the cytoplasm. It catalyses the reaction RNA(n+1) + phosphate = RNA(n) + a ribonucleoside 5'-diphosphate. Involved in mRNA degradation. Catalyzes the phosphorolysis of single-stranded polyribonucleotides processively in the 3'- to 5'-direction. This is Polyribonucleotide nucleotidyltransferase from Corynebacterium jeikeium (strain K411).